A 307-amino-acid chain; its full sequence is uncharacterized protein (307 aa).

The ABC transporter domain maps to 5-233 (VQTNGLTKTY…NTEYIELVTP (229 aa)). An ATP-binding site is contributed by 37-44 (GPNGAGKT).

It belongs to the ABC transporter superfamily.

This is an uncharacterized protein from Bacillus subtilis (strain 168).